The primary structure comprises 424 residues: UDP-sugar transporter protein SLC35A5 (424 aa).

At 1–8 (MEKQCCSH) the chain is on the cytoplasmic side. A helical transmembrane segment spans residues 9–29 (PVICSLSTMYTFLLGAIFIAL). Residues 30–53 (SSSRILLVKYSANEENKYDYLPTT) lie on the Lumenal side of the membrane. Residues 54-74 (VNVCSELVKLVFCVLVSFCVI) traverse the membrane as a helical segment. Residues 75–93 (KKDHQSRNLKYASWKEFSD) are Cytoplasmic-facing. A helical transmembrane segment spans residues 94 to 116 (FMKWSIPAFLYFLDNLIVFYVLS). Topologically, residues 117-119 (YLQ) are lumenal. A helical membrane pass occupies residues 120 to 142 (PAMAVIFSNFSIITTALLFRIVL). At 143–147 (KRRLN) the chain is on the cytoplasmic side. A helical transmembrane segment spans residues 148 to 168 (WIQWASLLTLFLSIVALTAGT). Topologically, residues 169-228 (KTLQHNLAGRGFHHDAFFSPSNSCLLFRSECPRKDNCTAKEWTFPEAKWNTTARVFSHIR) are lumenal. The N-linked (GlcNAc...) asparagine glycan is linked to N204. The helical transmembrane segment at 229 to 249 (LGMGHVLIIVQCFISSMANIY) threads the bilayer. At 250–263 (NEKILKEGNQLTES) the chain is on the cytoplasmic side. A helical membrane pass occupies residues 264 to 284 (IFIQNSKLYFFGILFNGLTLG). The Lumenal segment spans residues 285–303 (LQRSNRDQIKNCGFFYGHS). Residues 304 to 324 (AFSVALIFVTAFQGLSVAFIL) traverse the membrane as a helical segment. The Cytoplasmic portion of the chain corresponds to 325–330 (KFLDNM). A helical transmembrane segment spans residues 331–351 (FHVLMAQVTTVIITTVSVLVF). The Lumenal segment spans residues 352 to 354 (DFR). The chain crosses the membrane as a helical span at residues 355-375 (PSLEFFLEAPSVLLSIFIYNA). At 376 to 424 (SKPQVPEYAPRQERIRDLSGNLWERSSGDGEELERLTKPKSDESDEDTF) the chain is on the cytoplasmic side. A phosphoserine mark is found at S394, S416, and S419. Residues 397 to 424 (LWERSSGDGEELERLTKPKSDESDEDTF) form a disordered region. Residues 408–417 (LERLTKPKSD) are compositionally biased toward basic and acidic residues.

It belongs to the nucleotide-sugar transporter family. SLC35A subfamily. Probably forms homooligomers and heterooligomers with SLC35A1, SLC35A2, SLC35A3 and SLC35A4.

It localises to the golgi apparatus membrane. The catalysed reaction is UMP(out) + UDP-alpha-D-glucuronate(in) = UMP(in) + UDP-alpha-D-glucuronate(out). It carries out the reaction UMP(out) + UDP-N-acetyl-alpha-D-glucosamine(in) = UMP(in) + UDP-N-acetyl-alpha-D-glucosamine(out). The enzyme catalyses UDP-N-acetyl-alpha-D-galactosamine(in) + UMP(out) = UDP-N-acetyl-alpha-D-galactosamine(out) + UMP(in). Its function is as follows. Probable UDP-sugar:UMP transmembrane antiporter involved in UDP-alpha-D-glucuronate/UDP-GlcA, UDP-GlcNAc/UDP-N-acetyl-alpha-D-glucosamine and UDP-N-acetyl-alpha-D-galactosamine/UDP-GalNAc transport from the cytosol to the lumen of the Golgi. The polypeptide is UDP-sugar transporter protein SLC35A5 (Homo sapiens (Human)).